Consider the following 274-residue polypeptide: Putative pyruvate, phosphate dikinase regulatory protein (274 aa).

153-160 serves as a coordination point for ADP; it reads GISRTSKT.

It belongs to the pyruvate, phosphate/water dikinase regulatory protein family. PDRP subfamily.

It carries out the reaction N(tele)-phospho-L-histidyl/L-threonyl-[pyruvate, phosphate dikinase] + ADP = N(tele)-phospho-L-histidyl/O-phospho-L-threonyl-[pyruvate, phosphate dikinase] + AMP + H(+). It catalyses the reaction N(tele)-phospho-L-histidyl/O-phospho-L-threonyl-[pyruvate, phosphate dikinase] + phosphate + H(+) = N(tele)-phospho-L-histidyl/L-threonyl-[pyruvate, phosphate dikinase] + diphosphate. In terms of biological role, bifunctional serine/threonine kinase and phosphorylase involved in the regulation of the pyruvate, phosphate dikinase (PPDK) by catalyzing its phosphorylation/dephosphorylation. The sequence is that of Putative pyruvate, phosphate dikinase regulatory protein from Bartonella tribocorum (strain CIP 105476 / IBS 506).